We begin with the raw amino-acid sequence, 159 residues long: Ribosome maturation factor RimM (159 aa).

Residues 86–159 (SDAFHLPKLI…IHIETIEGLI (74 aa)) form the PRC barrel domain.

This sequence belongs to the RimM family. In terms of assembly, binds ribosomal protein uS19.

It localises to the cytoplasm. In terms of biological role, an accessory protein needed during the final step in the assembly of 30S ribosomal subunit, possibly for assembly of the head region. Essential for efficient processing of 16S rRNA. May be needed both before and after RbfA during the maturation of 16S rRNA. It has affinity for free ribosomal 30S subunits but not for 70S ribosomes. The sequence is that of Ribosome maturation factor RimM from Acholeplasma laidlawii (strain PG-8A).